A 120-amino-acid polypeptide reads, in one-letter code: NAD(P)H-quinone oxidoreductase subunit 3 (120 aa).

The next 3 helical transmembrane spans lie at 10-30, 64-84, and 89-109; these read FLGF…TNLI, MFAL…PWAV, and LGLL…IALA.

Belongs to the complex I subunit 3 family. In terms of assembly, NDH-1 can be composed of about 15 different subunits; different subcomplexes with different compositions have been identified which probably have different functions.

It localises to the cellular thylakoid membrane. The enzyme catalyses a plastoquinone + NADH + (n+1) H(+)(in) = a plastoquinol + NAD(+) + n H(+)(out). It catalyses the reaction a plastoquinone + NADPH + (n+1) H(+)(in) = a plastoquinol + NADP(+) + n H(+)(out). In terms of biological role, NDH-1 shuttles electrons from an unknown electron donor, via FMN and iron-sulfur (Fe-S) centers, to quinones in the respiratory and/or the photosynthetic chain. The immediate electron acceptor for the enzyme in this species is believed to be plastoquinone. Couples the redox reaction to proton translocation, and thus conserves the redox energy in a proton gradient. Cyanobacterial NDH-1 also plays a role in inorganic carbon-concentration. The sequence is that of NAD(P)H-quinone oxidoreductase subunit 3 from Prochlorococcus marinus (strain MIT 9215).